The following is a 389-amino-acid chain: Galactokinase (389 aa).

34-37 provides a ligand contact to substrate; it reads EHTD. ATP-binding positions include S68 and 125 to 131; that span reads GSGLSSS. Mg(2+) is bound by residues S131 and E163. Catalysis depends on D175, which acts as the Proton acceptor. Y225 contacts substrate.

The protein belongs to the GHMP kinase family. GalK subfamily.

The protein resides in the cytoplasm. The catalysed reaction is alpha-D-galactose + ATP = alpha-D-galactose 1-phosphate + ADP + H(+). The protein operates within carbohydrate metabolism; galactose metabolism. Catalyzes the transfer of the gamma-phosphate of ATP to D-galactose to form alpha-D-galactose-1-phosphate (Gal-1-P). The polypeptide is Galactokinase (Clostridium acetobutylicum (strain ATCC 824 / DSM 792 / JCM 1419 / IAM 19013 / LMG 5710 / NBRC 13948 / NRRL B-527 / VKM B-1787 / 2291 / W)).